The chain runs to 474 residues: Trehalose-6-phosphate synthase (474 aa).

Position 10 (Arg10) interacts with D-glucose 6-phosphate. 22–23 (GG) contacts UDP-alpha-D-glucose. Tyr77 and Asp131 together coordinate D-glucose 6-phosphate. The UDP-alpha-D-glucose site is built by Arg263 and Lys268. A D-glucose 6-phosphate-binding site is contributed by Arg301. UDP-alpha-D-glucose is bound by residues Phe340 and 366 to 370 (LVAKE).

This sequence belongs to the glycosyltransferase 20 family. In terms of assembly, homotetramer.

The catalysed reaction is D-glucose 6-phosphate + UDP-alpha-D-glucose = alpha,alpha-trehalose 6-phosphate + UDP + H(+). It participates in glycan biosynthesis; trehalose biosynthesis. In terms of biological role, probably involved in the osmoprotection via the biosynthesis of trehalose. Catalyzes the transfer of glucose from UDP-alpha-D-glucose (UDP-Glc) to D-glucose 6-phosphate (Glc-6-P) to form trehalose-6-phosphate. Acts with retention of the anomeric configuration of the UDP-sugar donor. This is Trehalose-6-phosphate synthase from Escherichia coli O9:H4 (strain HS).